The following is a 130-amino-acid chain: Small ribosomal subunit protein uS8 (130 aa).

Belongs to the universal ribosomal protein uS8 family. In terms of assembly, part of the 30S ribosomal subunit. Contacts proteins S5 and S12.

Its function is as follows. One of the primary rRNA binding proteins, it binds directly to 16S rRNA central domain where it helps coordinate assembly of the platform of the 30S subunit. The polypeptide is Small ribosomal subunit protein uS8 (Chromohalobacter salexigens (strain ATCC BAA-138 / DSM 3043 / CIP 106854 / NCIMB 13768 / 1H11)).